The sequence spans 124 residues: Small ribosomal subunit protein uS12 (124 aa).

Residue Asp90 is modified to 3-methylthioaspartic acid.

It belongs to the universal ribosomal protein uS12 family. Part of the 30S ribosomal subunit. Contacts proteins S8 and S17. May interact with IF1 in the 30S initiation complex.

With S4 and S5 plays an important role in translational accuracy. In terms of biological role, interacts with and stabilizes bases of the 16S rRNA that are involved in tRNA selection in the A site and with the mRNA backbone. Located at the interface of the 30S and 50S subunits, it traverses the body of the 30S subunit contacting proteins on the other side and probably holding the rRNA structure together. The combined cluster of proteins S8, S12 and S17 appears to hold together the shoulder and platform of the 30S subunit. In Wolbachia pipientis wMel, this protein is Small ribosomal subunit protein uS12.